A 166-amino-acid polypeptide reads, in one-letter code: Phosphopantetheine adenylyltransferase (166 aa).

Position 14 (Thr14) interacts with substrate. Residues 14–15 (TF) and His22 contribute to the ATP site. Substrate-binding residues include Lys46, Leu78, and Arg92. ATP is bound by residues 93 to 95 (GLR), Glu103, and 128 to 134 (WMYLSSS).

Belongs to the bacterial CoaD family. Homohexamer. The cofactor is Mg(2+).

It is found in the cytoplasm. The catalysed reaction is (R)-4'-phosphopantetheine + ATP + H(+) = 3'-dephospho-CoA + diphosphate. It participates in cofactor biosynthesis; coenzyme A biosynthesis; CoA from (R)-pantothenate: step 4/5. In terms of biological role, reversibly transfers an adenylyl group from ATP to 4'-phosphopantetheine, yielding dephospho-CoA (dPCoA) and pyrophosphate. The polypeptide is Phosphopantetheine adenylyltransferase (Maridesulfovibrio salexigens (strain ATCC 14822 / DSM 2638 / NCIMB 8403 / VKM B-1763) (Desulfovibrio salexigens)).